The primary structure comprises 206 residues: ATP phosphoribosyltransferase (206 aa).

Belongs to the ATP phosphoribosyltransferase family. Short subfamily. As to quaternary structure, heteromultimer composed of HisG and HisZ subunits.

It is found in the cytoplasm. It catalyses the reaction 1-(5-phospho-beta-D-ribosyl)-ATP + diphosphate = 5-phospho-alpha-D-ribose 1-diphosphate + ATP. The protein operates within amino-acid biosynthesis; L-histidine biosynthesis; L-histidine from 5-phospho-alpha-D-ribose 1-diphosphate: step 1/9. In terms of biological role, catalyzes the condensation of ATP and 5-phosphoribose 1-diphosphate to form N'-(5'-phosphoribosyl)-ATP (PR-ATP). Has a crucial role in the pathway because the rate of histidine biosynthesis seems to be controlled primarily by regulation of HisG enzymatic activity. The protein is ATP phosphoribosyltransferase of Campylobacter curvus (strain 525.92).